Reading from the N-terminus, the 598-residue chain is Elongation factor 4 (598 aa).

The tr-type G domain maps to 2–184 (KNIRNFSIIA…EIVAKIPAPE (183 aa)). Residues 14–19 (DHGKST) and 131–134 (NKID) each bind GTP.

This sequence belongs to the TRAFAC class translation factor GTPase superfamily. Classic translation factor GTPase family. LepA subfamily.

It is found in the cell inner membrane. The catalysed reaction is GTP + H2O = GDP + phosphate + H(+). Its function is as follows. Required for accurate and efficient protein synthesis under certain stress conditions. May act as a fidelity factor of the translation reaction, by catalyzing a one-codon backward translocation of tRNAs on improperly translocated ribosomes. Back-translocation proceeds from a post-translocation (POST) complex to a pre-translocation (PRE) complex, thus giving elongation factor G a second chance to translocate the tRNAs correctly. Binds to ribosomes in a GTP-dependent manner. The chain is Elongation factor 4 from Haemophilus influenzae (strain 86-028NP).